The primary structure comprises 274 residues: Large ribosomal subunit protein uL2cy (274 aa).

Disordered regions lie at residues Met1–Asn25 and Met223–Lys274. Over residues Lys7–Asn25 the composition is skewed to polar residues.

The protein belongs to the universal ribosomal protein uL2 family. In terms of assembly, part of the 50S ribosomal subunit.

The protein localises to the plastid. Its subcellular location is the chloroplast. This is Large ribosomal subunit protein uL2cy (rpl2-B) from Atropa belladonna (Belladonna).